Reading from the N-terminus, the 417-residue chain is UDP-N-acetylglucosamine 1-carboxyvinyltransferase (417 aa).

Position 22-23 (22-23 (KN)) interacts with phosphoenolpyruvate. A UDP-N-acetyl-alpha-D-glucosamine-binding site is contributed by Arg92. Cys116 acts as the Proton donor in catalysis. 2-(S-cysteinyl)pyruvic acid O-phosphothioketal is present on Cys116. Asp304 and Ile326 together coordinate UDP-N-acetyl-alpha-D-glucosamine.

It belongs to the EPSP synthase family. MurA subfamily.

It is found in the cytoplasm. The enzyme catalyses phosphoenolpyruvate + UDP-N-acetyl-alpha-D-glucosamine = UDP-N-acetyl-3-O-(1-carboxyvinyl)-alpha-D-glucosamine + phosphate. It participates in cell wall biogenesis; peptidoglycan biosynthesis. In terms of biological role, cell wall formation. Adds enolpyruvyl to UDP-N-acetylglucosamine. This Geobacter metallireducens (strain ATCC 53774 / DSM 7210 / GS-15) protein is UDP-N-acetylglucosamine 1-carboxyvinyltransferase.